Here is a 542-residue protein sequence, read N- to C-terminus: Phosphoenolpyruvate carboxykinase (ATP) (542 aa).

3 residues coordinate substrate: R67, Y208, and K214. Residues K214, H233, and 249–257 (GLSGTGKTT) each bind ATP. 2 residues coordinate Mn(2+): K214 and H233. D270 serves as a coordination point for Mn(2+). ATP-binding positions include E298, R334, 450-451 (RI), and T456. R334 contributes to the substrate binding site.

Belongs to the phosphoenolpyruvate carboxykinase (ATP) family. Monomer. The cofactor is Mn(2+).

It is found in the cytoplasm. It catalyses the reaction oxaloacetate + ATP = phosphoenolpyruvate + ADP + CO2. It functions in the pathway carbohydrate biosynthesis; gluconeogenesis. In terms of biological role, involved in the gluconeogenesis. Catalyzes the conversion of oxaloacetate (OAA) to phosphoenolpyruvate (PEP) through direct phosphoryl transfer between the nucleoside triphosphate and OAA. The protein is Phosphoenolpyruvate carboxykinase (ATP) of Vibrio vulnificus (strain CMCP6).